The sequence spans 117 residues: Acylphosphatase (117 aa).

Residues 31-117 enclose the Acylphosphatase-like domain; sequence RWRWIIQGQV…RGDDWFEVRY (87 aa). Active-site residues include Arg46 and Asn64.

The protein belongs to the acylphosphatase family.

It catalyses the reaction an acyl phosphate + H2O = a carboxylate + phosphate + H(+). The chain is Acylphosphatase (acyP) from Synechococcus sp. (strain CC9902).